We begin with the raw amino-acid sequence, 211 residues long: Suppressor of cytokine signaling 1 (211 aa).

A disordered region spans residues 1-53 (MVAHNQVAADNAVSTAAEPRRRPEPSSSSSSSPAAPARPRPCPAVPAPAPGDT). Residues 25-35 (PSSSSSSSPAA) show a composition bias toward low complexity. Residues 36–49 (PARPRPCPAVPAPA) show a composition bias toward pro residues. The segment at 55–66 (FRTFRSHADYRR) is kinase inhibitory region (KIR). The interval 67–78 (ITRASALLDACG) is extended SH2 subdomain (ESS). The SH2 domain maps to 79-174 (FYWGPLSVHG…PLRQRRVRPL (96 aa)). Residues 161 to 210 (MLGAPLRQRRVRPLQELCRQRIVATVGRENLARIPLNPVLRDYLSSFPFQ) enclose the SOCS box domain. The tract at residues 173–182 (PLQELCRQRI) is interaction with Elongin BC complex.

Belongs to the SOCS1 family. As to quaternary structure, interacts with multiple activated signaling proteins of the tyrosine kinase signaling pathway including JAK family kinases, TEC, KIT, GRB2 and VAV. Binding to JAKs is mediated through the KIR and SH2 domains to a phosphorylated tyrosine residue within the JAK JH1 domain. Binds the SH3 domain of GRB2 via diproline determinants in the N-terminus, and the N-terminal regulatory domain of VAV. Interacts with the Elongin BC complex (ELOB and ELOC). Component of an ECS CBC(SOCS1) E3 ubiquitin-protein ligase complex which contains Elongin BC, CUL5, RBX1 and SOCS1. Interacts (via SH2 domain and SOCS box) with TRIM8. Interacts with AXL, CUL2 and FGFR3. Interacts with INSR. Interacts with TRIM8. Interacts with DCUN1D1. Interacts with IFNGR1. As to expression, expressed in all tissues with high expression in spleen, small intestine and peripheral blood leukocytes.

It is found in the nucleus. Its subcellular location is the cytoplasmic vesicle. Its pathway is protein modification; protein ubiquitination. Its function is as follows. Essential negative regulator of type I and type II interferon (IFN) signaling, as well as that of other cytokines, including IL2, IL4, IL6 and leukemia inhibitory factor (LIF). Downregulates cytokine signaling by inhibiting the JAK/STAT signaling pathway. Acts by binding to JAK proteins and to IFNGR1 and inhibiting their kinase activity. In vitro, suppresses Tec protein-tyrosine activity. Regulates IFN-gamma (IFNG)-mediated sensory neuron survival. Probable substrate recognition component of an ECS (Elongin BC-CUL2/5-SOCS-box protein) E3 ubiquitin ligase complex which mediates the ubiquitination and subsequent proteasomal degradation of target proteins. This is Suppressor of cytokine signaling 1 (SOCS1) from Homo sapiens (Human).